We begin with the raw amino-acid sequence, 413 residues long: MGQQGQSGTSAGNPDSLKQDKISKSGDSLTTQDGNATGQQEATNYTNLPPNLTPTADWPNALSFTNKNNAHRAQLFLRGLLGSIPVLVNRSGSDSNKFQATDQKWSYTDLQSDQTKLNLPAYGEVNGLLNPALVETYFGNTRAGGSGSNTTSSPGIGFKIPEQNNDSKATLITPGLAWTPQDVGNLVVSGTSLSFQLGGWLVSFTDFIKPRAGYLGLQLSGLDASDSDQRELIWAKRPWAAFRGSWVNRLGRVESVWDLKGVWADQAQLAAQAATSEASGSALAPHPNALAFQVSVVEASAYSSSTSSSGSGSSSNTSPYLHLIKPKKVESTTQLDQGLKNLLDPNQVRTKLRQSFGTDHSTQPQSLKTTTPVFGTSSGNIGSVLSGGGAGGGSSGSGQSGVDLSPVERVSGH.

Composition is skewed to polar residues over residues 1 to 13 (MGQQ…SAGN), 25 to 54 (SGDS…NLTP), and 355 to 376 (SFGT…VFGT). Disordered regions lie at residues 1–60 (MGQQ…DWPN) and 355–413 (SFGT…VSGH). The segment covering 385-399 (LSGGGAGGGSSGSGQ) has biased composition (gly residues).

The protein belongs to the adhesin P1 family.

This chain is Putative adhesin P1-like protein MPN_144, found in Mycoplasma pneumoniae (strain ATCC 29342 / M129 / Subtype 1) (Mycoplasmoides pneumoniae).